Reading from the N-terminus, the 348-residue chain is Trans-L-3-hydroxyproline dehydratase (348 aa).

C101 serves as the catalytic Proton acceptor. Substrate-binding positions include G102–H103, D263, and G268–S269.

This sequence belongs to the proline racemase family. Homodimer.

It catalyses the reaction trans-3-hydroxy-L-proline = 1-pyrroline-2-carboxylate + H2O. Functionally, catalyzes the dehydration of trans-3-hydroxy-L-proline to delta-1-pyrroline-2-carboxylate (Pyr2C). The protein is Trans-L-3-hydroxyproline dehydratase (l3hypdh) of Xenopus tropicalis (Western clawed frog).